We begin with the raw amino-acid sequence, 243 residues long: Small ribosomal subunit protein uS3 (243 aa).

The region spanning 39 to 107 is the KH type-2 domain; sequence LRKLISKELQ…KIKLNIKEIH (69 aa). The segment at 212–243 is disordered; that stretch reads VAKSPAEPATTAPTPAPERRERQPRRNSNASA.

This sequence belongs to the universal ribosomal protein uS3 family. In terms of assembly, part of the 30S ribosomal subunit. Forms a tight complex with proteins S10 and S14.

Functionally, binds the lower part of the 30S subunit head. Binds mRNA in the 70S ribosome, positioning it for translation. The chain is Small ribosomal subunit protein uS3 from Chloroflexus aurantiacus (strain ATCC 29364 / DSM 637 / Y-400-fl).